A 307-amino-acid chain; its full sequence is Nucleotide-binding protein ACP_0619 (307 aa).

Residues 1-14 (MPAPEPTRRAKKDA) are compositionally biased toward basic and acidic residues. The tract at residues 1–23 (MPAPEPTRRAKKDASASPSPAHP) is disordered. 33–40 (GLSGAGKG) provides a ligand contact to ATP. 83 to 86 (DVRE) is a GTP binding site.

It belongs to the RapZ-like family.

Its function is as follows. Displays ATPase and GTPase activities. This is Nucleotide-binding protein ACP_0619 from Acidobacterium capsulatum (strain ATCC 51196 / DSM 11244 / BCRC 80197 / JCM 7670 / NBRC 15755 / NCIMB 13165 / 161).